A 115-amino-acid chain; its full sequence is Large ribosomal subunit protein bL19 (115 aa).

Belongs to the bacterial ribosomal protein bL19 family.

Its function is as follows. This protein is located at the 30S-50S ribosomal subunit interface and may play a role in the structure and function of the aminoacyl-tRNA binding site. The sequence is that of Large ribosomal subunit protein bL19 from Coxiella burnetii (strain CbuK_Q154) (Coxiella burnetii (strain Q154)).